The chain runs to 510 residues: Inositol-3-phosphate synthase (510 aa).

Positions 70, 71, 72, 73, 143, 180, 190, 193, 230, 231, 232, 233, 281, 282, 306, 309, 340, 341, 342, 355, 393, 394, 422, and 423 each coordinate NAD(+).

This sequence belongs to the myo-inositol 1-phosphate synthase family. The cofactor is NAD(+).

Its subcellular location is the cytoplasm. It localises to the cytosol. The protein resides in the nucleus. The catalysed reaction is D-glucose 6-phosphate = 1D-myo-inositol 3-phosphate. The protein operates within polyol metabolism; myo-inositol biosynthesis; myo-inositol from D-glucose 6-phosphate: step 1/2. Key enzyme in myo-inositol biosynthesis pathway that catalyzes the conversion of glucose 6-phosphate to 1-myo-inositol 1-phosphate in a NAD-dependent manner. This is Inositol-3-phosphate synthase from Brassica napus (Rape).